The following is a 398-amino-acid chain: CCA-adding enzyme (398 aa).

ATP contacts are provided by glycine 32 and arginine 35. CTP contacts are provided by glycine 32 and arginine 35. The Mg(2+) site is built by aspartate 45 and aspartate 47. The ATP site is built by arginine 116, aspartate 159, arginine 162, arginine 165, and arginine 168. The CTP site is built by arginine 116, aspartate 159, arginine 162, arginine 165, and arginine 168.

Belongs to the tRNA nucleotidyltransferase/poly(A) polymerase family. Bacterial CCA-adding enzyme type 3 subfamily. As to quaternary structure, homodimer. Mg(2+) is required as a cofactor.

The catalysed reaction is a tRNA precursor + 2 CTP + ATP = a tRNA with a 3' CCA end + 3 diphosphate. It catalyses the reaction a tRNA with a 3' CCA end + 2 CTP + ATP = a tRNA with a 3' CCACCA end + 3 diphosphate. In terms of biological role, catalyzes the addition and repair of the essential 3'-terminal CCA sequence in tRNAs without using a nucleic acid template. Adds these three nucleotides in the order of C, C, and A to the tRNA nucleotide-73, using CTP and ATP as substrates and producing inorganic pyrophosphate. tRNA 3'-terminal CCA addition is required both for tRNA processing and repair. Also involved in tRNA surveillance by mediating tandem CCA addition to generate a CCACCA at the 3' terminus of unstable tRNAs. While stable tRNAs receive only 3'-terminal CCA, unstable tRNAs are marked with CCACCA and rapidly degraded. The sequence is that of CCA-adding enzyme from Lactobacillus gasseri (strain ATCC 33323 / DSM 20243 / BCRC 14619 / CIP 102991 / JCM 1131 / KCTC 3163 / NCIMB 11718 / NCTC 13722 / AM63).